The chain runs to 80 residues: Large ribosomal subunit protein eL14 (80 aa).

The protein belongs to the eukaryotic ribosomal protein eL14 family.

The chain is Large ribosomal subunit protein eL14 from Methanocaldococcus jannaschii (strain ATCC 43067 / DSM 2661 / JAL-1 / JCM 10045 / NBRC 100440) (Methanococcus jannaschii).